The sequence spans 359 residues: Adenosine 3'-phospho 5'-phosphosulfate transporter 1 (359 aa).

7 consecutive transmembrane segments (helical) span residues 26–46 (NMKL…YGIL), 68–88 (STFL…VIVL), 157–177 (YSIA…GKIS), 184–204 (TSYG…TSTF), 228–248 (SIIS…IEFI), 254–276 (VFFD…YYTI), and 300–320 (TLIY…LVFG). Residues 332–359 (KKHGGHSHGGSNAATTTTPSNNSNNTEK) are disordered. Residues 340 to 359 (GGSNAATTTTPSNNSNNTEK) show a composition bias toward low complexity.

Belongs to the nucleotide-sugar transporter family. SLC35B subfamily.

The protein localises to the golgi apparatus membrane. It catalyses the reaction 3'-phosphoadenylyl sulfate(in) + adenosine 3',5'-bisphosphate(out) = 3'-phosphoadenylyl sulfate(out) + adenosine 3',5'-bisphosphate(in). Probably functions as a 3'-phosphoadenylyl sulfate:adenosine 3',5'-bisphosphate antiporter at the Golgi membranes. Mediates the transport from the cytosol into the lumen of the Golgi of 3'-phosphoadenylyl sulfate/adenosine 3'-phospho 5'-phosphosulfate (PAPS), a universal sulfuryl donor for sulfation events that take place in that compartment. The polypeptide is Adenosine 3'-phospho 5'-phosphosulfate transporter 1 (slc35b2) (Dictyostelium discoideum (Social amoeba)).